A 377-amino-acid polypeptide reads, in one-letter code: MFRQMKLGSLATKLLLACFLVTCTSGLDIHPNLIGAGQKEGIEIWRIETFVPVPVPKSEYGKFHEGDSYIVLSTKEDKSKKGIFTWDIYYWLGKSTTQDESGTAAVLTVELDDALGKTPVQHREIQGQESEQFVKLFPGGVKYLPGGIDSGFKHTDTNAPGQKKLYQVKGAKYIRVRQVELSAKSLNNGDCFILDTGSEVYVWVGKNSQLPERLKATKAANQIKELDHRGRGKVFIVDASSTSREVKEFFTKLGSGSPSEVANTSEDDQEYEKKQDAMVTLYKVSDASGKLVTEKLSEKPLKQSMLKSEDCFVLDTVTSGVFVWIGRNSSIQEKIEAFKKGLAFLKDNKHPTWTQMQRIVDGGEPTAFKEYFLSWKN.

The N-terminal stretch at 1-26 is a signal peptide; sequence MFRQMKLGSLATKLLLACFLVTCTSG. Gelsolin-like repeat units follow at residues 50-133, 174-243, and 298-368; these read FVPV…SEQF, IRVR…SSTS, and EKPL…PTAF.

Expressed by the venom gland (posterior main gland) (at protein level).

It localises to the secreted. The chain is Actin depolymerising venom protein gelsolin 1 from Platymeris rhadamanthus (Red spot assassin bug).